A 170-amino-acid chain; its full sequence is NADH-ubiquinone oxidoreductase chain 6 (170 aa).

5 helical membrane-spanning segments follow: residues M1–S21, F26–F46, S49–Y69, V86–G106, and W138–V158.

The protein belongs to the complex I subunit 6 family. Core subunit of respiratory chain NADH dehydrogenase (Complex I) which is composed of 45 different subunits.

The protein localises to the mitochondrion inner membrane. It carries out the reaction a ubiquinone + NADH + 5 H(+)(in) = a ubiquinol + NAD(+) + 4 H(+)(out). Core subunit of the mitochondrial membrane respiratory chain NADH dehydrogenase (Complex I) which catalyzes electron transfer from NADH through the respiratory chain, using ubiquinone as an electron acceptor. Essential for the catalytic activity and assembly of complex I. The chain is NADH-ubiquinone oxidoreductase chain 6 (mt-nd6) from Xenopus laevis (African clawed frog).